A 977-amino-acid chain; its full sequence is AP-2 complex subunit alpha-1 (977 aa).

The tract at residues 614–702 (AKLKRKKGPG…PSLGPTPEEA (89 aa)) is disordered. Phosphoserine occurs at positions 626 and 652. Over residues 646-657 (PTPSTVSTPSPS) the composition is skewed to low complexity. At Thr-653 the chain carries Phosphothreonine. Ser-655 is subject to Phosphoserine. Pro residues predominate over residues 666 to 675 (APPPAAPPAP).

Belongs to the adaptor complexes large subunit family. Adaptor protein complex 2 (AP-2) is a heterotetramer composed of two large adaptins (alpha-type subunit AP2A1 or AP2A2 and beta-type subunit AP2B1), a medium adaptin (mu-type subunit AP2M1) and a small adaptin (sigma-type subunit AP2S1). Interacts with HIP1 and RAB11FIP2. Interacts with SLC12A5. Interacts with clathrin. Interacts with SGIP1. Interacts with RFTN1. Interacts with KIAA1107. Interacts with PICALM. Together with AP2B1 and AP2M1, it interacts with ADAM10; this interaction facilitates ADAM10 endocytosis from the plasma membrane during long-term potentiation in hippocampal neurons. Interacts with ABCB11; this interaction regulates cell membrane expression of ABCB11 through its internalization in a clathrin-dependent manner and its subsequent degradation. Probably interacts with ACE2 (via endocytic sorting signal motif); the interaction is inhibited by ACE2 phosphorylation. In terms of tissue distribution, expressed in the brain (at protein level). Isoform A: Expressed only in neuronal tissue and skeletal muscle. Isoform B: Widely expressed.

The protein resides in the cell membrane. It is found in the membrane. Its subcellular location is the coated pit. In terms of biological role, component of the adaptor protein complex 2 (AP-2). Adaptor protein complexes function in protein transport via transport vesicles in different membrane traffic pathways. Adaptor protein complexes are vesicle coat components and appear to be involved in cargo selection and vesicle formation. AP-2 is involved in clathrin-dependent endocytosis in which cargo proteins are incorporated into vesicles surrounded by clathrin (clathrin-coated vesicles, CCVs) which are destined for fusion with the early endosome. The clathrin lattice serves as a mechanical scaffold but is itself unable to bind directly to membrane components. Clathrin-associated adaptor protein (AP) complexes which can bind directly to both the clathrin lattice and to the lipid and protein components of membranes are considered to be the major clathrin adaptors contributing the CCV formation. AP-2 also serves as a cargo receptor to selectively sort the membrane proteins involved in receptor-mediated endocytosis. AP-2 seems to play a role in the recycling of synaptic vesicle membranes from the presynaptic surface. AP-2 recognizes Y-X-X-[FILMV] (Y-X-X-Phi) and [ED]-X-X-X-L-[LI] endocytosis signal motifs within the cytosolic tails of transmembrane cargo molecules. AP-2 may also play a role in maintaining normal post-endocytic trafficking through the ARF6-regulated, non-clathrin pathway. The AP-2 alpha subunit binds polyphosphoinositide-containing lipids, positioning AP-2 on the membrane. During long-term potentiation in hippocampal neurons, AP-2 is responsible for the endocytosis of ADAM10. The AP-2 alpha subunit acts via its C-terminal appendage domain as a scaffolding platform for endocytic accessory proteins. The AP-2 alpha and AP-2 sigma subunits are thought to contribute to the recognition of the [ED]-X-X-X-L-[LI] motif. The polypeptide is AP-2 complex subunit alpha-1 (Ap2a1) (Mus musculus (Mouse)).